A 149-amino-acid polypeptide reads, in one-letter code: Nucleoside diphosphate kinase (149 aa).

Residues Lys-9, Phe-57, Arg-85, Thr-91, Arg-102, and Asn-112 each coordinate ATP. The Pros-phosphohistidine intermediate role is filled by His-115.

The protein belongs to the NDK family. In terms of assembly, homotetramer. Mg(2+) serves as cofactor.

Its subcellular location is the cytoplasm. The catalysed reaction is a 2'-deoxyribonucleoside 5'-diphosphate + ATP = a 2'-deoxyribonucleoside 5'-triphosphate + ADP. The enzyme catalyses a ribonucleoside 5'-diphosphate + ATP = a ribonucleoside 5'-triphosphate + ADP. Major role in the synthesis of nucleoside triphosphates other than ATP. The ATP gamma phosphate is transferred to the NDP beta phosphate via a ping-pong mechanism, using a phosphorylated active-site intermediate. This is Nucleoside diphosphate kinase from Staphylococcus aureus (strain MSSA476).